A 779-amino-acid chain; its full sequence is Angiomotin-like protein 2 (779 aa).

Disordered stretches follow at residues 41–215 and 263–308; these read GGAG…QYPH and QYLQ…TSGS. Basic and acidic residues-rich tracts occupy residues 100 to 112 and 141 to 152; these read KGEE…EAKA and RRQDEALRELRH. Positions 101–307 are required for interaction with CDH5; the sequence is GEELPTYEEA…SAQASSATSG (207 aa). Y107 bears the Phosphotyrosine; by FGFR1 mark. Low complexity predominate over residues 160-169; it reads ERLLQLSLER. Positions 177–193 are enriched in polar residues; it reads HMSSSHSFPQLARNQQG. A compositionally biased stretch (pro residues) spans 196-213; sequence LRGPPAEGPESRGPPPQY. Residues 220-307 are required for interaction with CDH1; sequence HETTTAVTDP…SAQASSATSG (88 aa). Positions 298-308 are enriched in low complexity; that stretch reads SAQASSATSGS. The stretch at 308 to 581 forms a coiled coil; that stretch reads SAHLAQMEAV…KYLEERAMRQ (274 aa). Glycyl lysine isopeptide (Lys-Gly) (interchain with G-Cter in ubiquitin) cross-links involve residues K347 and K408. Disordered stretches follow at residues 522–543 and 679–753; these read RAQQ…SPEL and TQGW…GCSS. Residues 530 to 539 are compositionally biased toward gly residues; sequence APGGSSGSGG. Polar residues-rich tracts occupy residues 680–690 and 725–740; these read QGWQGLSSSER and DGST…TSTC. Phosphoserine is present on residues S759 and S762. The PDZ-binding signature appears at 776–779; sequence EILI.

It belongs to the angiomotin family. Part of a complex composed of AMOTL2, MAGI1 and CDH5, within the complex AMOTL2 acts as a scaffold protein for the interaction of MAGI1 with CDH5. The complex is required for coupling actin fibers to cell junctions in endothelial cells. Within the complex AMOTL2 (via its N-terminus) interacts with CDH5. Interacts (via N-terminus) with MAGI1. Interacts (via N-terminus) with ACTB; the interaction facilitates binding of cell junction complexes to actin fibers in endothelial cells. Interacts with CDH1; the interaction may facilitate binding of radial actin fibers to cell junction complexes. Interacts with SRC. Interacts with YAP1; the interaction is required for ubiquitination of AMOTL2 and localization of YAP1 to tight junctions. Interacts with WWP1; the interaction facilitates WWP1 interaction with the Crumbs complex and subsequent WWP1 translocation to the plasma membrane. WWP1 interaction with the Crumbs complex promotes WWP1 monoubiquitination of AMOTL2 which subsequently activates the Hippo signaling pathway. When ubiquitinated interacts with LATS2 (via UBA domain); the interaction promotes LATS2 phosphorylation of YAP1. Interacts (via PPXY motif) with WWTR1/TAZ (via WW domain); the interaction promotes WWTR1/TAZ localization to the cytoplasm and thereby inhibition of its transcriptional properties. Interacts with PHLDB2; interaction may facilitate PHLDB2 localization to the myotube podosome cortex that surrounds the core. Monoubiquitinated at Lys-347 and Lys-408 by Crumbs complex-bound WWP1. De-ubiquitinated at Lys-347 and Lys-408 by USP9X; the interaction may be promoted by cell contact inhibition. Deubiquitination of AMOTL2 negatively regulates Hippo signaling activation. Post-translationally, phosphorylation at Tyr-107 is necessary for efficient binding to SRC and synergistically functioning with SRC to activate the downstream MAPK pathway.

The protein resides in the recycling endosome. It localises to the cytoplasm. The protein localises to the cell projection. It is found in the podosome. Its subcellular location is the cell junction. Its function is as follows. Regulates the translocation of phosphorylated SRC to peripheral cell-matrix adhesion sites. Required for proper architecture of actin filaments. Plays a role in coupling actin fibers to cell junctions in endothelial cells and is therefore required for correct endothelial cell morphology via facilitating transcellular transmission of mechanical force resulting in endothelial cell elongation. Required for the anchoring of radial actin fibers to CDH1 junction complexes at the cell membrane which facilitates organization of radial actin fiber structure and cellular response to contractile forces. This contributes to maintenance of cell area, size, shape, epithelial sheet organization and trophectoderm cell properties that facilitate blastocyst zona hatching. Inhibits the Wnt/beta-catenin signaling pathway, probably by recruiting CTNNB1 to recycling endosomes and hence preventing its translocation to the nucleus. Participates in angiogenesis. Activates the Hippo signaling pathway in response to cell contact inhibition via interaction with and ubiquitination by Crumbs complex-bound WWP1. Ubiquitinated AMOTL2 then interacts with LATS2 which in turn phosphorylates YAP1, excluding it from the nucleus and localizing it to the cytoplasm and tight junctions, therefore ultimately repressing YAP1-driven transcription of target genes. Acts to inhibit WWTR1/TAZ transcriptional coactivator activity via sequestering WWTR1/TAZ in the cytoplasm and at tight junctions. Regulates the size and protein composition of the podosome cortex and core at myofibril neuromuscular junctions. Selectively promotes FGF-induced MAPK activation through SRC. May play a role in the polarity, proliferation and migration of endothelial cells. This chain is Angiomotin-like protein 2, found in Homo sapiens (Human).